The sequence spans 336 residues: Glyceraldehyde-3-phosphate dehydrogenase (336 aa).

NAD(+) is bound by residues 12–13 (RI), D34, and R79. Residues 150-152 (SCT), T181, 210-211 (TG), and R233 each bind D-glyceraldehyde 3-phosphate. C151 (nucleophile) is an active-site residue. NAD(+) is bound at residue N315.

This sequence belongs to the glyceraldehyde-3-phosphate dehydrogenase family. In terms of assembly, homotetramer.

It localises to the cytoplasm. It catalyses the reaction D-glyceraldehyde 3-phosphate + phosphate + NAD(+) = (2R)-3-phospho-glyceroyl phosphate + NADH + H(+). The protein operates within carbohydrate degradation; glycolysis; pyruvate from D-glyceraldehyde 3-phosphate: step 1/5. This chain is Glyceraldehyde-3-phosphate dehydrogenase (gpdA), found in Aspergillus niger.